Consider the following 2057-residue polypeptide: Rho guanine nucleotide exchange factor 17 (2057 aa).

Disordered regions lie at residues 20 to 361, 375 to 461, and 481 to 559; these read ERWS…DTGG, LASP…SNPD, and RVRK…LKPS. A phosphoserine mark is found at S142 and S152. Residues 227–249 show a composition bias toward low complexity; the sequence is ARASSSSSIASSYPVSRSRAASS. Phosphoserine occurs at positions 305 and 308. Gly residues predominate over residues 314 to 323; that stretch reads GGLGSAGGVG. A phosphoserine mark is found at S324, S330, S377, S381, S389, S404, and S414. Polar residues predominate over residues 382–391; sequence RGSSRYSSTE. Positions 440-451 are enriched in basic and acidic residues; the sequence is PLRDGGLDLDKN. Position 456 is a phosphoserine (S456). The span at 507-524 shows a compositional bias: low complexity; sequence EQSESTLSQSPTSPTTRP. Phosphoserine occurs at positions 538 and 611. Disordered stretches follow at residues 615-647 and 663-952; these read AGDM…PEPL and LSST…VRHA. The segment covering 663-672 has biased composition (polar residues); the sequence is LSSTSAQTNH. S689 is subject to Phosphoserine. T692 and T695 each carry phosphothreonine. Over residues 710–719 the composition is skewed to polar residues; that stretch reads PNGTELSNGE. S728 carries the phosphoserine modification. The segment covering 747-760 has biased composition (polar residues); that stretch reads SVDSNLLGSLNSKT. Over residues 820–829 the composition is skewed to basic and acidic residues; sequence SLSDPSRRGE. The residue at position 906 (S906) is a Phosphoserine. The segment covering 909-920 has biased composition (basic residues); that stretch reads LTRRGSKKRPAR. Basic and acidic residues predominate over residues 922–931; it reads SHQELRREEG. Polar residues predominate over residues 933-944; the sequence is QDQTGSLTQTRS. Residues S953 and S994 each carry the phosphoserine modification. A compositionally biased stretch (pro residues) spans 1015–1027; sequence GPVDLPCLPPSAP. Positions 1015 to 1054 are disordered; it reads GPVDLPCLPPSAPPSTETKPSGAARATPDEPAPASKCCSK. One can recognise a DH domain in the interval 1059–1247; the sequence is MRKHVTMTLL…KQVAERINKG (189 aa). Position 1324 is a phosphoserine (S1324). 2 disordered regions span residues 1555–1713 and 1983–2050; these read RCPR…SSRG and CSTP…DSTN. Residues 1579-1589 are compositionally biased toward acidic residues; sequence LDVEATAEEEA. The segment covering 1638–1674 has biased composition (low complexity); it reads SPSPSGTLQSQASQSTISSSFGNEETPSSKEATAETT.

Acts as a guanine nucleotide exchange factor (GEF) for RhoA GTPases. The protein is Rho guanine nucleotide exchange factor 17 (Arhgef17) of Mus musculus (Mouse).